The chain runs to 897 residues: Isoleucine--tRNA ligase (897 aa).

Residues 59–69 carry the 'HIGH' region motif; that stretch reads PYANGDIHVGH. L-isoleucyl-5'-AMP is bound at residue E553. A 'KMSKS' region motif is present at residues 594 to 598; it reads KMSKS. K597 serves as a coordination point for ATP. 4 residues coordinate Zn(2+): C866, C869, C883, and C886.

The protein belongs to the class-I aminoacyl-tRNA synthetase family. IleS type 1 subfamily. Monomer. Zn(2+) is required as a cofactor.

The protein localises to the cytoplasm. The enzyme catalyses tRNA(Ile) + L-isoleucine + ATP = L-isoleucyl-tRNA(Ile) + AMP + diphosphate. Its function is as follows. Catalyzes the attachment of isoleucine to tRNA(Ile). As IleRS can inadvertently accommodate and process structurally similar amino acids such as valine, to avoid such errors it has two additional distinct tRNA(Ile)-dependent editing activities. One activity is designated as 'pretransfer' editing and involves the hydrolysis of activated Val-AMP. The other activity is designated 'posttransfer' editing and involves deacylation of mischarged Val-tRNA(Ile). The chain is Isoleucine--tRNA ligase from Mycoplasmopsis synoviae (strain 53) (Mycoplasma synoviae).